The following is a 154-amino-acid chain: MNYSAKLTGEGLKIAVVTSRFNHFITDRLTEGAIDTLERHGVVKEDIDIFLVPGAFELPFVASKLAQKKKYDAVITLGCVIRGATTHYDYVCNEAAKGIAKAGEYGTPVIFGVVTTESIEQAIERAGTKAGNKGGEAAISAIEMANLNKMMDEL.

Residues F21, A55 to E57, and C79 to I81 each bind 5-amino-6-(D-ribitylamino)uracil. Residue A84–T85 coordinates (2S)-2-hydroxy-3-oxobutyl phosphate. The active-site Proton donor is H87. F111 is a 5-amino-6-(D-ribitylamino)uracil binding site. (2S)-2-hydroxy-3-oxobutyl phosphate is bound at residue R125.

It belongs to the DMRL synthase family. As to quaternary structure, forms an icosahedral capsid composed of 60 subunits, arranged as a dodecamer of pentamers.

The catalysed reaction is (2S)-2-hydroxy-3-oxobutyl phosphate + 5-amino-6-(D-ribitylamino)uracil = 6,7-dimethyl-8-(1-D-ribityl)lumazine + phosphate + 2 H2O + H(+). It participates in cofactor biosynthesis; riboflavin biosynthesis; riboflavin from 2-hydroxy-3-oxobutyl phosphate and 5-amino-6-(D-ribitylamino)uracil: step 1/2. In terms of biological role, catalyzes the formation of 6,7-dimethyl-8-ribityllumazine by condensation of 5-amino-6-(D-ribitylamino)uracil with 3,4-dihydroxy-2-butanone 4-phosphate. This is the penultimate step in the biosynthesis of riboflavin. This Macrococcus caseolyticus (strain JCSC5402) (Macrococcoides caseolyticum) protein is 6,7-dimethyl-8-ribityllumazine synthase.